Here is a 125-residue protein sequence, read N- to C-terminus: Large ribosomal subunit protein uL22 (125 aa).

The protein belongs to the universal ribosomal protein uL22 family. Part of the 50S ribosomal subunit.

Functionally, this protein binds specifically to 23S rRNA; its binding is stimulated by other ribosomal proteins, e.g. L4, L17, and L20. It is important during the early stages of 50S assembly. It makes multiple contacts with different domains of the 23S rRNA in the assembled 50S subunit and ribosome. The globular domain of the protein is located near the polypeptide exit tunnel on the outside of the subunit, while an extended beta-hairpin is found that lines the wall of the exit tunnel in the center of the 70S ribosome. The chain is Large ribosomal subunit protein uL22 from Thermobifida fusca (strain YX).